The primary structure comprises 159 residues: Putative 4-hydroxy-4-methyl-2-oxoglutarate aldolase (159 aa).

Residues 74–77 (GDNL) and Arg96 contribute to the substrate site. Asp97 is a binding site for a divalent metal cation.

This sequence belongs to the class II aldolase/RraA-like family. Homotrimer. Requires a divalent metal cation as cofactor.

The enzyme catalyses 4-hydroxy-4-methyl-2-oxoglutarate = 2 pyruvate. It carries out the reaction oxaloacetate + H(+) = pyruvate + CO2. Its function is as follows. Catalyzes the aldol cleavage of 4-hydroxy-4-methyl-2-oxoglutarate (HMG) into 2 molecules of pyruvate. Also contains a secondary oxaloacetate (OAA) decarboxylase activity due to the common pyruvate enolate transition state formed following C-C bond cleavage in the retro-aldol and decarboxylation reactions. This chain is Putative 4-hydroxy-4-methyl-2-oxoglutarate aldolase, found in Bacillus cereus (strain ZK / E33L).